The primary structure comprises 236 residues: uncharacterized protein (236 aa).

Residues 1 to 26 (MTNTWNRLALLIFAVLSLLVAGELQA) form the signal peptide.

Belongs to the periplasmic pilus chaperone family.

The protein localises to the periplasm. In terms of biological role, part of the elfADCG-ycbUVF fimbrial operon, which promotes adhesion of bacteria to different abiotic surfaces. Could be required for the biogenesis of fimbriae. This is an uncharacterized protein from Escherichia coli (strain K12).